The chain runs to 261 residues: Small ribosomal subunit protein eS4z (261 aa).

In terms of domain architecture, S4 RNA-binding spans 42–104 (LPLVLIIRNR…TNENFRLLYD (63 aa)).

This sequence belongs to the eukaryotic ribosomal protein eS4 family.

The protein localises to the cytoplasm. In Arabidopsis thaliana (Mouse-ear cress), this protein is Small ribosomal subunit protein eS4z (RPS4A).